Reading from the N-terminus, the 293-residue chain is Nucleotide-binding protein Bcer98_3698 (293 aa).

14-21 contacts ATP; sequence GMSGAGKT. 65–68 is a GTP binding site; the sequence is DLRG.

This sequence belongs to the RapZ-like family.

In terms of biological role, displays ATPase and GTPase activities. The sequence is that of Nucleotide-binding protein Bcer98_3698 from Bacillus cytotoxicus (strain DSM 22905 / CIP 110041 / 391-98 / NVH 391-98).